Here is a 115-residue protein sequence, read N- to C-terminus: MNIIKKIEGEHLRFDLPKFKSGDTVKVHLRIVEGEKERIQVFQGNVIRIHRGTTGGTFTVRKVSDGVGVERVFPLHSPFIDRVEMVTEGRVRRSRLYYLRELKGKAARIKPKNRF.

The protein belongs to the bacterial ribosomal protein bL19 family.

In terms of biological role, this protein is located at the 30S-50S ribosomal subunit interface and may play a role in the structure and function of the aminoacyl-tRNA binding site. In Nitratidesulfovibrio vulgaris (strain DSM 19637 / Miyazaki F) (Desulfovibrio vulgaris), this protein is Large ribosomal subunit protein bL19.